The primary structure comprises 440 residues: Protein eva-1 homolog C (440 aa).

The segment covering 1–13 has biased composition (pro residues); the sequence is MLLPGHPRPPPAP. Residues 1 to 23 form a disordered region; the sequence is MLLPGHPRPPPAPQSAQNQGLRR. An N-terminal signal peptide occupies residues 1 to 48; it reads MLLPGHPRPPPAPQSAQNQGLRRQVEPPGQLLRLFYCTVLVCSKETSA. Residues 49 to 321 are Extracellular-facing; that stretch reads LTDFSGYLTK…AYIRAHPERA (273 aa). N-linked (GlcNAc...) asparagine glycans are attached at residues Asn62, Asn109, and Asn165. Residues 67 to 159 enclose the SUEL-type lectin 1 domain; the sequence is ACDGDYLNLQ…KYLLVSFKCQ (93 aa). The 93-residue stretch at 168-260 folds into the SUEL-type lectin 2 domain; that stretch reads VCENQELKLH…KYLTVAYACV (93 aa). The chain crosses the membrane as a helical span at residues 322-342; that stretch reads ALLFMSSVCIGLLLTLCALVI. The Cytoplasmic segment spans residues 343–440; the sequence is RVSCTKDFRE…SLPRNVGHFY (98 aa). Residues 364–384 form a disordered region; sequence SDKAEEDSEEDLEEEDSSDSQ. The segment covering 367–381 has biased composition (acidic residues); sequence AEEDSEEDLEEEDSS.

It belongs to the EVA1 family. As to expression, ubiquitous.

It localises to the cell membrane. Its function is as follows. Binds heparin. This Mus musculus (Mouse) protein is Protein eva-1 homolog C (Eva1c).